A 422-amino-acid chain; its full sequence is Protein IQ-DOMAIN 5 (422 aa).

The Nuclear localization signal motif lies at 23-30; the sequence is SKKDENVK. IQ domains are found at residues 87-115, 116-138, and 139-164; these read ENRA…GLVR, LQAL…CMQA, and LVRV…TSQQ. A calmodulin-binding region spans residues 137–151; that stretch reads QALVRVQARVRARRV. Residues 269 to 422 are disordered; the sequence is GENGMEQSEN…NSDPIKQRLA (154 aa). Residues 273-308 are compositionally biased toward polar residues; sequence MEQSENVPKTQIKSVSKMPNTSNLVSGVSSQMTGPC. Residues 310 to 327 show a composition bias toward low complexity; that stretch reads SDGDSSSPGISSSIPVVS. Residues 355–371 are compositionally biased toward basic and acidic residues; sequence NPKERSREPNRSSKERL. The segment covering 373-387 has biased composition (polar residues); that stretch reads LPNSGKSLGSQSTKA. Residues 412–422 are compositionally biased toward basic and acidic residues; that stretch reads RNSDPIKQRLA.

Belongs to the IQD family. Binds to multiple calmodulin (CaM) in the presence of Ca(2+) and CaM-like proteins. Expressed mostly in vegetative tissues including older parts of the root, cotyledons, leaves and shoot apical meristems (SAM). Present at low levels in pollen, siliques and seeds.

It localises to the nucleus. Its subcellular location is the cytoplasm. The protein resides in the cytoskeleton. The protein localises to the spindle. It is found in the phragmoplast. Functionally, may be involved in cooperative interactions with calmodulins or calmodulin-like proteins. Recruits calmodulin (CaM) calcium sensor proteins to cortical microtubule arrays, thus being a potential scaffold in cellular signaling and trafficking. Binds to microtubules (MTs) and promotes MT assembly and dynamics to modulate pavement cell (PC) morphogenesis via cellulose deposition-dependent anisotropic cell expansion triggered by cellulose synthase complexes (CSCs). May associate with nucleic acids and regulate gene expression at the transcriptional or post-transcriptional level. This is Protein IQ-DOMAIN 5 from Arabidopsis thaliana (Mouse-ear cress).